We begin with the raw amino-acid sequence, 1378 residues long: DNA-directed RNA polymerase subunit beta (1378 aa).

The protein belongs to the RNA polymerase beta chain family. In terms of assembly, the RNAP catalytic core consists of 2 alpha, 1 beta, 1 beta' and 1 omega subunit. When a sigma factor is associated with the core the holoenzyme is formed, which can initiate transcription.

It catalyses the reaction RNA(n) + a ribonucleoside 5'-triphosphate = RNA(n+1) + diphosphate. In terms of biological role, DNA-dependent RNA polymerase catalyzes the transcription of DNA into RNA using the four ribonucleoside triphosphates as substrates. This chain is DNA-directed RNA polymerase subunit beta, found in Roseobacter denitrificans (strain ATCC 33942 / OCh 114) (Erythrobacter sp. (strain OCh 114)).